We begin with the raw amino-acid sequence, 61 residues long: Putative protein RenD (61 aa).

This Escherichia coli (strain K12) protein is Putative protein RenD (renD).